A 54-amino-acid polypeptide reads, in one-letter code: UPF0391 membrane protein BAB1_1670 (54 aa).

2 helical membrane passes run 5–25 and 29–48; these read VLVF…GIAG and GIAQ…SLIA.

The protein belongs to the UPF0391 family.

It is found in the cell membrane. The chain is UPF0391 membrane protein BAB1_1670 from Brucella abortus (strain 2308).